The chain runs to 396 residues: Formate-dependent phosphoribosylglycinamide formyltransferase (396 aa).

Residues Glu25–Leu26 and Glu85 contribute to the N(1)-(5-phospho-beta-D-ribosyl)glycinamide site. Residues Arg117, Lys158, Ser163–Gln168, Glu198–Ile201, and Glu206 each bind ATP. Residues Arg122 to Leu311 enclose the ATP-grasp domain. Mg(2+) contacts are provided by Glu270 and Glu282. N(1)-(5-phospho-beta-D-ribosyl)glycinamide is bound by residues Asp289, Lys359, and Arg366 to Arg367.

It belongs to the PurK/PurT family. As to quaternary structure, homodimer.

The catalysed reaction is N(1)-(5-phospho-beta-D-ribosyl)glycinamide + formate + ATP = N(2)-formyl-N(1)-(5-phospho-beta-D-ribosyl)glycinamide + ADP + phosphate + H(+). It participates in purine metabolism; IMP biosynthesis via de novo pathway; N(2)-formyl-N(1)-(5-phospho-D-ribosyl)glycinamide from N(1)-(5-phospho-D-ribosyl)glycinamide (formate route): step 1/1. In terms of biological role, involved in the de novo purine biosynthesis. Catalyzes the transfer of formate to 5-phospho-ribosyl-glycinamide (GAR), producing 5-phospho-ribosyl-N-formylglycinamide (FGAR). Formate is provided by PurU via hydrolysis of 10-formyl-tetrahydrofolate. The protein is Formate-dependent phosphoribosylglycinamide formyltransferase of Shewanella frigidimarina (strain NCIMB 400).